Consider the following 611-residue polypeptide: MSKIIGIDLGTTNSCVAVMEGGEPKVIPNPEGNRTTPSVVAFKNEERQVGEVAKRQAITNPNTIMSVKRHMGTDYKVEVEGKDFTPQEISAIILQNLKASAEAYLGETVTKAVITVPAYFNDAERQATKDAGRIAGLEVERIINEPTAAALAYGLEKQDEEQKILVYDLGGGTFDVSILELADGTFEVISTAGDNRLGGDDFDQVIIDHLVAEFKKENSIDLSQDKMALQRLKDAAEKAKKDLSGVTQTQISLPFISAGAAGPLHLELTLTRAKFEEISAGLVERTLEPTRRALKDAGFAPSELDKVILVGGSTRIPAVQEAIKRETGKEPYKGVNPDEVVALGAAVQGGVLTGDVEGVLLLDVTPLSLGIETMGGVFTKLIERNTTIPTSKSQVFSTAADNQPAVDIHVLQGERPMSADNKTLGRFQLTDLPPAPRGIPQIEVTFDIDANGIVNVRAKDLGTSKEQTITIQSSSGLSDEEVDRMVQEAESNADADQKRKEEVELRNEADQLVFQTDKVVKDLEGKVDAAEVAKATEAKEALQAAIEKNELEEIRVKKDALQEIVQQLTVKLYEQAQAAAGQAEGAQGAQDAGAKKDNVVDAEFEEVKEDK.

The residue at position 173 (Thr-173) is a Phosphothreonine; by autocatalysis. The segment covering 579-592 (AAGQAEGAQGAQDA) has biased composition (low complexity). The interval 579 to 611 (AAGQAEGAQGAQDAGAKKDNVVDAEFEEVKEDK) is disordered. Positions 600–611 (VDAEFEEVKEDK) are enriched in acidic residues.

Belongs to the heat shock protein 70 family.

In terms of biological role, acts as a chaperone. This chain is Chaperone protein DnaK, found in Bacillus mycoides (strain KBAB4) (Bacillus weihenstephanensis).